A 266-amino-acid polypeptide reads, in one-letter code: uncharacterized protein (266 aa).

The 97-residue stretch at 35–131 folds into the PH domain; sequence VLVGEGVLVK…WMLHIERCVT (97 aa). An FYVE-type zinc finger spans residues 152 to 212; it reads DGEAVKCMVC…VCDHCFDSLS (61 aa). 8 residues coordinate Zn(2+): Cys-158, Cys-161, Cys-175, Cys-178, Cys-183, Cys-186, Cys-204, and Cys-207. The disordered stretch occupies residues 213–266; it reads SATPGQEESEPKTGNRLHHEDSSSDSEDEVNGSGRSSNESRPTFYREDVQQPAT. Basic and acidic residues-rich tracts occupy residues 221 to 234 and 256 to 266; these read SEPKTGNRLHHEDS and FYREDVQQPAT.

This is an uncharacterized protein from Caenorhabditis elegans.